The sequence spans 475 residues: Putative aldehyde dehydrogenase (475 aa).

NAD(+)-binding positions include 146-147 and 223-224; these read WN and GS. Glu245 serves as the catalytic Proton acceptor. Position 246 (Leu246) interacts with NAD(+). Cys279 (nucleophile) is an active-site residue. Glu379 serves as a coordination point for NAD(+).

This sequence belongs to the aldehyde dehydrogenase family.

The enzyme catalyses an aldehyde + NAD(+) + H2O = a carboxylate + NADH + 2 H(+). This Staphylococcus aureus (strain bovine RF122 / ET3-1) protein is Putative aldehyde dehydrogenase.